A 180-amino-acid chain; its full sequence is 2-oxoglutarate dehydrogenase, mitochondrial (180 aa).

Lys-14 is modified (N6-succinyllysine). Position 40 is a phosphoserine (Ser-40). A thiamine diphosphate-binding site is contributed by Arg-64.

It belongs to the alpha-ketoglutarate dehydrogenase family. In terms of assembly, homodimer. The 2-oxoglutarate dehydrogenase complex is composed of OGDH (2-oxoglutarate dehydrogenase; E1), DLST (dihydrolipoamide succinyltransferase; E2) and DLD (dihydrolipoamide dehydrogenase; E3). It contains multiple copies of the three enzymatic components (E1, E2 and E3). In the nucleus, the 2-oxoglutarate dehydrogenase complex associates with KAT2A. Interacts with ABHD11; this interaction maintains the functional lipoylation of the 2-oxoglutarate dehydrogenase complex. Thiamine diphosphate is required as a cofactor. The cofactor is Mg(2+).

The protein localises to the mitochondrion matrix. It is found in the nucleus. It carries out the reaction N(6)-[(R)-lipoyl]-L-lysyl-[protein] + 2-oxoglutarate + H(+) = N(6)-[(R)-S(8)-succinyldihydrolipoyl]-L-lysyl-[protein] + CO2. Calcium ions and ADP stimulate, whereas ATP and NADH reduce catalytic activity. Its function is as follows. 2-oxoglutarate dehydrogenase (E1) component of the 2-oxoglutarate dehydrogenase complex (OGDHC), which mediates the decarboxylation of alpha-ketoglutarate. The 2-oxoglutarate dehydrogenase complex catalyzes the overall conversion of 2-oxoglutarate to succinyl-CoA and CO(2). The 2-oxoglutarate dehydrogenase complex is mainly active in the mitochondrion. A fraction of the 2-oxoglutarate dehydrogenase complex also localizes in the nucleus and is required for lysine succinylation of histones: associates with KAT2A on chromatin and provides succinyl-CoA to histone succinyltransferase KAT2A. In Mesocricetus auratus (Golden hamster), this protein is 2-oxoglutarate dehydrogenase, mitochondrial.